A 141-amino-acid polypeptide reads, in one-letter code: UPF0179 protein Cmaq_1008 (141 aa).

This sequence belongs to the UPF0179 family.

The protein is UPF0179 protein Cmaq_1008 of Caldivirga maquilingensis (strain ATCC 700844 / DSM 13496 / JCM 10307 / IC-167).